Reading from the N-terminus, the 349-residue chain is Probable tRNA pseudouridine synthase B (349 aa).

Asp41 acts as the Nucleophile in catalysis. The region spanning 207–279 is the PUA domain; the sequence is YPKVIVKETA…KVIDIDNVLI (73 aa). The span at 300–309 shows a compositional bias: basic and acidic residues; sequence IPVQKPERKL. Positions 300 to 349 are disordered; the sequence is IPVQKPERKLHGNLQGSQEWKDTGNRGNPKRGGTGSKGFSSGFRKRKAKR.

This sequence belongs to the pseudouridine synthase TruB family. Type 2 subfamily.

The enzyme catalyses uridine(55) in tRNA = pseudouridine(55) in tRNA. Functionally, could be responsible for synthesis of pseudouridine from uracil-55 in the psi GC loop of transfer RNAs. This Picrophilus torridus (strain ATCC 700027 / DSM 9790 / JCM 10055 / NBRC 100828 / KAW 2/3) protein is Probable tRNA pseudouridine synthase B.